The following is a 99-amino-acid chain: L-rhamnose mutarotase (99 aa).

Tyr-18 is a binding site for substrate. Residue His-22 is the Proton donor of the active site. Residues Tyr-41 and 76–77 (WW) contribute to the substrate site.

The protein belongs to the rhamnose mutarotase family. In terms of assembly, homodimer.

Its subcellular location is the cytoplasm. It carries out the reaction alpha-L-rhamnose = beta-L-rhamnose. It functions in the pathway carbohydrate metabolism; L-rhamnose metabolism. Involved in the anomeric conversion of L-rhamnose. The protein is L-rhamnose mutarotase of Shigella boydii serotype 18 (strain CDC 3083-94 / BS512).